We begin with the raw amino-acid sequence, 111 residues long: Universal stress protein B (111 aa).

2 consecutive transmembrane segments (helical) span residues 1–21 (MIST…NMAR) and 90–110 (FILT…LLIW).

It belongs to the universal stress protein B family.

The protein localises to the cell inner membrane. The sequence is that of Universal stress protein B from Enterobacter sp. (strain 638).